The following is a 207-amino-acid chain: Large ribosomal subunit protein uL4 (207 aa).

The interval 43–80 (RRRSGTAKSKGRSEVSGSTRKLYRQKGTGNARSGSVKS) is disordered. The span at 69–78 (GTGNARSGSV) shows a compositional bias: polar residues.

Belongs to the universal ribosomal protein uL4 family. Part of the 50S ribosomal subunit.

Functionally, one of the primary rRNA binding proteins, this protein initially binds near the 5'-end of the 23S rRNA. It is important during the early stages of 50S assembly. It makes multiple contacts with different domains of the 23S rRNA in the assembled 50S subunit and ribosome. Forms part of the polypeptide exit tunnel. This chain is Large ribosomal subunit protein uL4, found in Desulforapulum autotrophicum (strain ATCC 43914 / DSM 3382 / VKM B-1955 / HRM2) (Desulfobacterium autotrophicum).